We begin with the raw amino-acid sequence, 308 residues long: Aspartate carbamoyltransferase catalytic subunit (308 aa).

Carbamoyl phosphate contacts are provided by Arg-57 and Thr-58. Lys-86 serves as a coordination point for L-aspartate. 3 residues coordinate carbamoyl phosphate: Arg-107, His-135, and Gln-138. Residues Arg-168 and Arg-228 each coordinate L-aspartate. Carbamoyl phosphate contacts are provided by Leu-267 and Pro-268.

It belongs to the aspartate/ornithine carbamoyltransferase superfamily. ATCase family. Heterododecamer (2C3:3R2) of six catalytic PyrB chains organized as two trimers (C3), and six regulatory PyrI chains organized as three dimers (R2).

The catalysed reaction is carbamoyl phosphate + L-aspartate = N-carbamoyl-L-aspartate + phosphate + H(+). It functions in the pathway pyrimidine metabolism; UMP biosynthesis via de novo pathway; (S)-dihydroorotate from bicarbonate: step 2/3. Functionally, catalyzes the condensation of carbamoyl phosphate and aspartate to form carbamoyl aspartate and inorganic phosphate, the committed step in the de novo pyrimidine nucleotide biosynthesis pathway. In Leptospira interrogans serogroup Icterohaemorrhagiae serovar Lai (strain 56601), this protein is Aspartate carbamoyltransferase catalytic subunit.